Here is a 110-residue protein sequence, read N- to C-terminus: Ribonuclease P protein component 1 (110 aa).

Belongs to the eukaryotic/archaeal RNase P protein component 1 family. As to quaternary structure, consists of a catalytic RNA component and at least 4-5 protein subunits.

The protein resides in the cytoplasm. The enzyme catalyses Endonucleolytic cleavage of RNA, removing 5'-extranucleotides from tRNA precursor.. In terms of biological role, part of ribonuclease P, a protein complex that generates mature tRNA molecules by cleaving their 5'-ends. This is Ribonuclease P protein component 1 from Methanosarcina acetivorans (strain ATCC 35395 / DSM 2834 / JCM 12185 / C2A).